Reading from the N-terminus, the 595-residue chain is Aspartate--tRNA(Asp/Asn) ligase (595 aa).

Glu175 lines the L-aspartate pocket. The interval Gln199–Lys202 is aspartate. Residues Arg221 and His454 each coordinate L-aspartate. Position 221-223 (Arg221–Glu223) interacts with ATP. Glu488 contacts ATP. Arg495 contributes to the L-aspartate binding site. Gly540 to Arg543 is an ATP binding site.

This sequence belongs to the class-II aminoacyl-tRNA synthetase family. Type 1 subfamily. In terms of assembly, homodimer.

The protein resides in the cytoplasm. It carries out the reaction tRNA(Asx) + L-aspartate + ATP = L-aspartyl-tRNA(Asx) + AMP + diphosphate. Its function is as follows. Aspartyl-tRNA synthetase with relaxed tRNA specificity since it is able to aspartylate not only its cognate tRNA(Asp) but also tRNA(Asn). Reaction proceeds in two steps: L-aspartate is first activated by ATP to form Asp-AMP and then transferred to the acceptor end of tRNA(Asp/Asn). The protein is Aspartate--tRNA(Asp/Asn) ligase of Rhizobium meliloti (strain 1021) (Ensifer meliloti).